Consider the following 416-residue polypeptide: Serine/threonine-protein kinase 26 (416 aa).

N-acetylalanine is present on Ala2. Position 4 is a phosphoserine (Ser4). The 251-residue stretch at 24-274 (FTKLERIGKG…AKELLKHKFI (251 aa)) folds into the Protein kinase domain. ATP is bound by residues 30–38 (IGKGSFGEV) and Lys53. Asp144 serves as the catalytic Proton acceptor. Thr178 is subject to Phosphothreonine; by autocatalysis. Positions 297–340 (EGHSDDESDSEGSDSESTSRENNTHPEWSFTTVRKKPDPKKVQN) are disordered. A phosphoserine mark is found at Ser300, Ser304, Ser306, Ser309, and Ser325. Residues Thr327 and Thr328 each carry the phosphothreonine modification.

This sequence belongs to the protein kinase superfamily. STE Ser/Thr protein kinase family. STE20 subfamily. In terms of assembly, homodimer. Interacts with PDCD10. Interacts with GOLGA2. Interacts with CTTNBP2NL. Interacts with RIPOR1 (via C-terminus); this interaction occurs in a PDCD10-dependent and Rho-independent manner. Interacts with PDCD10; this interaction is required for the association of STK26 with RIPOR1. Part of the core of STRIPAK complexes composed of PP2A catalytic and scaffolding subunits, the striatins (PP2A regulatory subunits), the striatin-associated proteins MOB4, STRIP1 and STRIP2, PDCD10 and members of the STE20 kinases, such as STK24 and STK26. Mg(2+) is required as a cofactor.

Its subcellular location is the cytoplasm. It is found in the golgi apparatus. The enzyme catalyses L-seryl-[protein] + ATP = O-phospho-L-seryl-[protein] + ADP + H(+). It carries out the reaction L-threonyl-[protein] + ATP = O-phospho-L-threonyl-[protein] + ADP + H(+). Its activity is regulated as follows. Interaction with Golgi matrix protein GOLGA2 leads to autophosphorylation on Thr-178, possibly as a consequence of stabilization of dimer formation. May also be activated by C-terminal cleavage. Its function is as follows. Serine/threonine-protein kinase that acts as a mediator of cell growth. Modulates apoptosis. In association with STK24 negatively regulates Golgi reorientation in polarized cell migration upon RHO activation. Phosphorylates ATG4B at 'Ser-383', thereby increasing autophagic flux. Part of the striatin-interacting phosphatase and kinase (STRIPAK) complexes. STRIPAK complexes have critical roles in protein (de)phosphorylation and are regulators of multiple signaling pathways including Hippo, MAPK, nuclear receptor and cytoskeleton remodeling. Different types of STRIPAK complexes are involved in a variety of biological processes such as cell growth, differentiation, apoptosis, metabolism and immune regulation. This Homo sapiens (Human) protein is Serine/threonine-protein kinase 26.